A 189-amino-acid polypeptide reads, in one-letter code: Auxin-induced protein IAA4 (189 aa).

The EAR-like (transcriptional repression) signature appears at 8 to 12 (LRLGL). Positions 92-179 (GIFVKVSMDG…SCKRLRIMKG (88 aa)) constitute a PB1 domain.

The protein belongs to the Aux/IAA family. Homodimers and heterodimers. In terms of processing, phosphorylated by phytochrome A in vitro.

The protein localises to the nucleus. In terms of biological role, aux/IAA proteins are short-lived transcriptional factors that function as repressors of early auxin response genes at low auxin concentrations. Repression is thought to result from the interaction with auxin response factors (ARFs), proteins that bind to the auxin-responsive promoter element (AuxRE). Formation of heterodimers with ARF proteins may alter their ability to modulate early auxin response genes expression. In Pisum sativum (Garden pea), this protein is Auxin-induced protein IAA4 (IAA4/5).